A 613-amino-acid polypeptide reads, in one-letter code: Autophagy-related protein 22-2 (613 aa).

Residues 1–30 (MAFNSTPPVSPGGEAQQRPPRFPGEDTTPT) are disordered. Residues 41 to 61 (YGIAAEVFAVCGVGSFLPLTL) traverse the membrane as a helical segment. N90 carries N-linked (GlcNAc...) asparagine glycosylation. 7 helical membrane-spanning segments follow: residues 120–140 (SFAM…LISF), 167–187 (LFIF…VVGV), 189–209 (CLGS…ANDP), 278–298 (VGLG…MLFA), 307–327 (ISGT…WFSF), 382–402 (VIIF…VSGT), and 418–438 (VGLL…LWPV). N448 is a glycosylation site (N-linked (GlcNAc...) asparagine). A run of 4 helical transmembrane segments spans residues 453–473 (LCIA…IPLF), 477–497 (GVVG…HGLV), 508–528 (FFGL…YAAT), and 553–573 (GFFF…MVNA). The interval 592–613 (REHASEYGGPSEEAEGLLARDI) is disordered.

It belongs to the ATG22 family.

It is found in the vacuole membrane. Functionally, vacuolar effluxer which mediate the efflux of amino acids resulting from autophagic degradation. The release of autophagic amino acids allows the maintenance of protein synthesis and viability during nitrogen starvation. The sequence is that of Autophagy-related protein 22-2 (atg22-2) from Aspergillus fumigatus (strain ATCC MYA-4609 / CBS 101355 / FGSC A1100 / Af293) (Neosartorya fumigata).